Here is a 228-residue protein sequence, read N- to C-terminus: Cytochrome b5 domain-containing protein 1 (228 aa).

The Cytochrome b5 heme-binding domain maps to 17 to 83; sequence RRYFTPSEVA…DPQTRDIRKH (67 aa). His-83 contributes to the heme binding site.

This sequence belongs to the cytochrome b5 family.

It is found in the cytoplasm. The protein resides in the cytoskeleton. Its subcellular location is the cilium axoneme. In terms of biological role, radial spoke stalk protein that binds heme under oxidizing conditions. Required for the coordinated beating of multiple cilia maybe by functioning in a redox signaling pathway. The protein is Cytochrome b5 domain-containing protein 1 (Cyb5d1) of Mus musculus (Mouse).